The chain runs to 366 residues: MSLYRKRLRLVKGEGIYVWDSQGKKYIDLIAGIGVNVLGHNHPEWVSELQEQLEKLVVAGPMFDHEEKYEMLEELEKFVTYEYVYIGNSGTEAVEAALKFARLYTGRKEIIAMTNAFHGRTMGALSATWKPKYREDFKPLVPGFKHIPFNDVEAAKEAITTETAAVIFEPIQGEGGVVPANEEFVKTLRDLTEDKGALLIADEVQSGLRTGKFLAIEHYKVEPDIVTMGKGIGNGVPVSLTLTNFDVERGKHGSTFGGNPLACKAVAVTLRILRREKLIEKAAEKFIEIKGENVVLTRGKGLMIGIVMKKPVAKVVEELQNRGYLVHTAGQRVIRLLPPLIISKDEINQAKSAIEGVINDIYGRKN.

Pyridoxal 5'-phosphate contacts are provided by residues 90 to 91 (GT) and phenylalanine 117. Arginine 120 is a substrate binding site. Residue 202–205 (DEVQ) participates in pyridoxal 5'-phosphate binding. At lysine 230 the chain carries N6-(pyridoxal phosphate)lysine. Residue serine 254 participates in substrate binding. Threonine 255 contributes to the pyridoxal 5'-phosphate binding site.

Belongs to the class-III pyridoxal-phosphate-dependent aminotransferase family. LysJ subfamily. As to quaternary structure, homodimer. Pyridoxal 5'-phosphate serves as cofactor.

The protein localises to the cytoplasm. The catalysed reaction is [amino-group carrier protein]-C-terminal-gamma-(L-lysyl)-L-glutamate + 2-oxoglutarate = [amino-group carrier protein]-C-terminal-N-(1-carboxy-5-oxopentan-1-yl)-L-glutamine + L-glutamate. It carries out the reaction [amino-group carrier protein]-C-terminal-gamma-(L-ornithyl)-L-glutamate + 2-oxoglutarate = [amino-group carrier protein]-C-terminal-gamma-(L-glutamyl-5-semialdehyde)-L-glutamate + L-glutamate. It participates in amino-acid biosynthesis; L-lysine biosynthesis via AAA pathway; L-lysine from L-alpha-aminoadipate (Thermus route): step 4/5. The protein operates within amino-acid biosynthesis; L-arginine biosynthesis. In terms of biological role, involved in both the arginine and lysine biosynthetic pathways. In Pyrococcus furiosus (strain ATCC 43587 / DSM 3638 / JCM 8422 / Vc1), this protein is Putative [LysW]-aminoadipate semialdehyde/glutamate semialdehyde transaminase.